A 1181-amino-acid polypeptide reads, in one-letter code: Integrin alpha-7 (1181 aa).

Residues 1–33 (MAGARSRDPWGASGICYLFGSLLVELLFSRAVA) form the signal peptide. Residues 34–1082 (FNLDVMGALR…MAVVAEGVPW (1049 aa)) are Extracellular-facing. FG-GAP repeat units follow at residues 35 to 103 (NLDV…ETDC), 110 to 175 (QGAD…IRDE), 185 to 238 (EGRP…SADL), 292 to 349 (DRLP…ASRL), 350 to 411 (VPEV…HWAG), 412 to 467 (ISPL…GVVA), and 471 to 530 (QVLE…IAPR). An N-linked (GlcNAc...) asparagine glycan is attached at N86. Disulfide bonds link C94–C103, C140–C163, and C184–C197. D372, N374, D376, D380, D434, N436, D438, D442, D492, D494, N496, Y498, and D500 together coordinate Ca(2+). Cystine bridges form between C539/C546, C552/C615, C681/C687, C781/C792, C939/C994, and C1001/C1006. Residue N786 is glycosylated (N-linked (GlcNAc...) asparagine). Over residues 950 to 961 (VDSRDRRRRELE) the composition is skewed to basic and acidic residues. The interval 950 to 978 (VDSRDRRRRELEPPEQQEPGERQEPSMSW) is disordered. A glycan (N-linked (GlcNAc...) asparagine) is linked at N989. N-linked (GlcNAc...) asparagine glycosylation is found at N1025 and N1045. A helical transmembrane segment spans residues 1083-1103 (WVILLAVLAGLLVLALLVLLL). Topologically, residues 1104 to 1181 (WKMGFFKRAK…PDGHPGPGTA (78 aa)) are cytoplasmic. A GFFKR motif motif is present at residues 1107 to 1111 (GFFKR). The segment at 1138-1181 (EKTGTILRNNWGSPRREGPDAHPILAADGHPELGPDGHPGPGTA) is disordered. 3 tandem repeats follow at residues 1157–1160 (DAHP), 1165–1168 (DGHP), and 1173–1176 (DGHP). The interval 1157-1176 (DAHPILAADGHPELGPDGHP) is 3 X 4 AA repeats of D-X-H-P.

It belongs to the integrin alpha chain family. As to quaternary structure, heterodimer of an alpha and a beta subunit. The alpha subunit is composed of a heavy and a light chain linked by a disulfide bond. Alpha-7 associates with beta-1. Interacts with COMP. Interacts (via C-terminus intracellular tail region) with CIB1; the interaction is stabilized/increased in a calcium- and magnesium-dependent manner. In terms of processing, ADP-ribosylated on at least two sites of the extracellular domain in skeletal myotubes. A 70 kDa form is created by proteolytic cleavage. Cleavage is elevated during myogenic differentiation and the cleaved form enhances cell adhesion and spreading on laminin. As to expression, isoforms containing segment A are predominantly expressed in skeletal muscle. Isoforms containing segment B are abundantly expressed in skeletal muscle, moderately in cardiac muscle, small intestine, colon, ovary and prostate and weakly in lung and testes. Isoforms containing segment X2D are expressed at low levels in fetal and adult skeletal muscle and in cardiac muscle, but are not detected in myoblasts and myotubes. In muscle fibers isoforms containing segment A and B are expressed at myotendinous and neuromuscular junctions; isoforms containing segment C are expressed at neuromuscular junctions and at extrasynaptic sites. Isoforms containing segments X1 or X2 or, at low levels, X1X2 are expressed in fetal and adult skeletal muscle (myoblasts and myotubes) and cardiac muscle.

It localises to the membrane. Functionally, integrin alpha-7/beta-1 is the primary laminin receptor on skeletal myoblasts and adult myofibers. During myogenic differentiation, it may induce changes in the shape and mobility of myoblasts, and facilitate their localization at laminin-rich sites of secondary fiber formation. It is involved in the maintenance of the myofibers cytoarchitecture as well as for their anchorage, viability and functional integrity. Isoform Alpha-7X2B and isoform Alpha-7X1B promote myoblast migration on laminin 1 and laminin 2/4, but isoform Alpha-7X1B is less active on laminin 1 (In vitro). Acts as a Schwann cell receptor for laminin-2. Acts as a receptor of COMP and mediates its effect on vascular smooth muscle cells (VSMCs) maturation. Required to promote contractile phenotype acquisition in differentiated airway smooth muscle (ASM) cells. The chain is Integrin alpha-7 (ITGA7) from Homo sapiens (Human).